The following is a 386-amino-acid chain: ATP phosphoribosyltransferase regulatory subunit (386 aa).

It belongs to the class-II aminoacyl-tRNA synthetase family. HisZ subfamily. As to quaternary structure, heteromultimer composed of HisG and HisZ subunits.

The protein resides in the cytoplasm. Its pathway is amino-acid biosynthesis; L-histidine biosynthesis; L-histidine from 5-phospho-alpha-D-ribose 1-diphosphate: step 1/9. Its function is as follows. Required for the first step of histidine biosynthesis. May allow the feedback regulation of ATP phosphoribosyltransferase activity by histidine. The chain is ATP phosphoribosyltransferase regulatory subunit from Limosilactobacillus fermentum (strain NBRC 3956 / LMG 18251) (Lactobacillus fermentum).